Here is a 75-residue protein sequence, read N- to C-terminus: Small ribosomal subunit protein bS18 (75 aa).

This sequence belongs to the bacterial ribosomal protein bS18 family. Part of the 30S ribosomal subunit. Forms a tight heterodimer with protein bS6.

In terms of biological role, binds as a heterodimer with protein bS6 to the central domain of the 16S rRNA, where it helps stabilize the platform of the 30S subunit. This Psychromonas ingrahamii (strain DSM 17664 / CCUG 51855 / 37) protein is Small ribosomal subunit protein bS18.